Here is a 98-residue protein sequence, read N- to C-terminus: NADH-ubiquinone oxidoreductase chain 4L (98 aa).

Transmembrane regions (helical) follow at residues Met-1–Met-21, Ser-29–Leu-49, and Ile-61–Val-81.

Belongs to the complex I subunit 4L family. In terms of assembly, core subunit of respiratory chain NADH dehydrogenase (Complex I) which is composed of 45 different subunits.

The protein localises to the mitochondrion inner membrane. The catalysed reaction is a ubiquinone + NADH + 5 H(+)(in) = a ubiquinol + NAD(+) + 4 H(+)(out). Functionally, core subunit of the mitochondrial membrane respiratory chain NADH dehydrogenase (Complex I) which catalyzes electron transfer from NADH through the respiratory chain, using ubiquinone as an electron acceptor. Part of the enzyme membrane arm which is embedded in the lipid bilayer and involved in proton translocation. This chain is NADH-ubiquinone oxidoreductase chain 4L (MT-ND4L), found in Arctocephalus australis (South American fur seal).